Consider the following 240-residue polypeptide: C-type lectin domain family 4 member A (240 aa).

At 1 to 48 (MASEITYAEVRIKNESNSSVTYSGSPAAPREKPTRHLSKPGSLLVPFT) the chain is on the cytoplasmic side. An ITIM motif motif is present at residues 5-10 (ITYAEV). Residues 18 to 38 (SSVTYSGSPAAPREKPTRHLS) are disordered. A helical; Signal-anchor for type II membrane protein transmembrane segment spans residues 49-69 (SLMVLLLLLAITFLVAFIIYF). Over 70–240 (QKYSQFLEEK…SVCQMKKIQL (171 aa)) the chain is Extracellular. 3 disulfides stabilise this stretch: C107–C118, C140–C233, and C208–C225. The region spanning 129-235 (SKASWSESEK…SGKQQSVCQM (107 aa)) is the C-type lectin domain. The Ca(2+) site is built by V149 and E155. An N-linked (GlcNAc...) asparagine glycan is attached at N190. The Ca(2+) site is built by E200, S202, and E206. Alpha-D-mannopyranose contacts are provided by residues 200-202 (EPS) and E206. Residue 211–213 (INH) coordinates N-acetyl-D-glucosamine. Residues N221 and D222 each coordinate Ca(2+).

In terms of assembly, may interact with PTPN6 via its ITIM site. As to expression, expressed by myeloid cells (dendritic cells, macrophages, and neutrophils) and B-cells.

The protein resides in the cell membrane. C-type lectin receptor that binds carbohydrates mannose and fucose but also weakly interacts with N-acetylglucosamine (GlcNAc) in a Ca(2+)-dependent manner. Involved in regulating immune reactivity. Once triggered by antigen, it is internalized by clathrin-dependent endocytosis and delivers its antigenic cargo into the antigen presentation pathway resulting in cross-priming of CD8(+) T cells. This cross-presentation and cross-priming are enhanced by TLR7 and TLR8 agonists with increased expansion of the CD8(+) T cells, high production of IFNG and TNF with reduced levels of IL4, IL5 and IL13. In plasmacytoid dendritic cells, inhibits TLR9-mediated IFNA and TNF production. May be involved via its ITIM motif (immunoreceptor tyrosine-based inhibitory motifs) in the inhibition of B-cell-receptor-mediated calcium mobilization and protein tyrosine phosphorylation. This chain is C-type lectin domain family 4 member A (Clec4a), found in Rattus norvegicus (Rat).